A 463-amino-acid polypeptide reads, in one-letter code: Ribulose bisphosphate carboxylase large chain (463 aa).

Lys5 bears the N6,N6,N6-trimethyllysine mark. Substrate-binding residues include Asn114 and Thr164. The active-site Proton acceptor is Lys166. Lys168 is a binding site for substrate. Residues Lys192, Asp194, and Glu195 each contribute to the Mg(2+) site. Lys192 bears the N6-carboxylysine mark. His285 (proton acceptor) is an active-site residue. Substrate is bound by residues Arg286, His318, and Ser370.

This sequence belongs to the RuBisCO large chain family. Type I subfamily. As to quaternary structure, heterohexadecamer of 8 large chains and 8 small chains; disulfide-linked. The disulfide link is formed within the large subunit homodimers. Mg(2+) is required as a cofactor. Post-translationally, the disulfide bond which can form in the large chain dimeric partners within the hexadecamer appears to be associated with oxidative stress and protein turnover.

The protein localises to the plastid. It is found in the chloroplast. It catalyses the reaction 2 (2R)-3-phosphoglycerate + 2 H(+) = D-ribulose 1,5-bisphosphate + CO2 + H2O. The catalysed reaction is D-ribulose 1,5-bisphosphate + O2 = 2-phosphoglycolate + (2R)-3-phosphoglycerate + 2 H(+). RuBisCO catalyzes two reactions: the carboxylation of D-ribulose 1,5-bisphosphate, the primary event in carbon dioxide fixation, as well as the oxidative fragmentation of the pentose substrate in the photorespiration process. Both reactions occur simultaneously and in competition at the same active site. In Pelargonium grandiflorum (Geranium), this protein is Ribulose bisphosphate carboxylase large chain.